A 125-amino-acid polypeptide reads, in one-letter code: UPF0102 protein PBPRA3228 (125 aa).

Belongs to the UPF0102 family.

This Photobacterium profundum (strain SS9) protein is UPF0102 protein PBPRA3228.